Here is a 204-residue protein sequence, read N- to C-terminus: Inner membrane-spanning protein YciB (204 aa).

Transmembrane regions (helical) follow at residues 48–68, 73–93, 102–122, 147–167, and 170–190; these read ILFA…LYFF, FESM…ATLM, WKPT…QLFT, GAWI…AYAF, and AVWV…FVVG.

This sequence belongs to the YciB family.

Its subcellular location is the cell inner membrane. Its function is as follows. Plays a role in cell envelope biogenesis, maintenance of cell envelope integrity and membrane homeostasis. The polypeptide is Inner membrane-spanning protein YciB (Nitrosococcus oceani (strain ATCC 19707 / BCRC 17464 / JCM 30415 / NCIMB 11848 / C-107)).